The chain runs to 278 residues: Small ribosomal subunit biogenesis GTPase RsgA (278 aa).

The 157-residue stretch at 62 to 218 (KNTLVRPKVV…ICDTPGFNVI (157 aa)) folds into the CP-type G domain. GTP contacts are provided by residues 112 to 115 (TKND) and 162 to 170 (GQSGVGKSS). The Zn(2+) site is built by Cys241, Cys246, His248, and Cys254.

The protein belongs to the TRAFAC class YlqF/YawG GTPase family. RsgA subfamily. In terms of assembly, monomer. Associates with 30S ribosomal subunit, binds 16S rRNA. The cofactor is Zn(2+).

The protein localises to the cytoplasm. Functionally, one of several proteins that assist in the late maturation steps of the functional core of the 30S ribosomal subunit. Helps release RbfA from mature subunits. May play a role in the assembly of ribosomal proteins into the subunit. Circularly permuted GTPase that catalyzes slow GTP hydrolysis, GTPase activity is stimulated by the 30S ribosomal subunit. The sequence is that of Small ribosomal subunit biogenesis GTPase RsgA from Mycoplasma pneumoniae (strain ATCC 29342 / M129 / Subtype 1) (Mycoplasmoides pneumoniae).